The following is a 604-amino-acid chain: UvrABC system protein C (604 aa).

The 80-residue stretch at Ala-13–Val-92 folds into the GIY-YIG domain. The UVR domain maps to Ser-205 to Ala-240.

The protein belongs to the UvrC family. In terms of assembly, interacts with UvrB in an incision complex.

The protein resides in the cytoplasm. The UvrABC repair system catalyzes the recognition and processing of DNA lesions. UvrC both incises the 5' and 3' sides of the lesion. The N-terminal half is responsible for the 3' incision and the C-terminal half is responsible for the 5' incision. This Chlamydia abortus (strain DSM 27085 / S26/3) (Chlamydophila abortus) protein is UvrABC system protein C.